We begin with the raw amino-acid sequence, 197 residues long: Phosphoheptose isomerase (197 aa).

Residues 34-192 (MVNALINGNK…CEGVDDCLFP (159 aa)) form the SIS domain. Substrate-binding positions include 49–51 (NGG), Q62, 91–92 (ND), S122, and H172. Residue Q62 participates in Zn(2+) binding. The Zn(2+) site is built by H172 and H180.

The protein belongs to the SIS family. GmhA subfamily. In terms of assembly, homotetramer. Zn(2+) is required as a cofactor.

It is found in the cytoplasm. It carries out the reaction 2 D-sedoheptulose 7-phosphate = D-glycero-alpha-D-manno-heptose 7-phosphate + D-glycero-beta-D-manno-heptose 7-phosphate. It functions in the pathway carbohydrate biosynthesis; D-glycero-D-manno-heptose 7-phosphate biosynthesis; D-glycero-alpha-D-manno-heptose 7-phosphate and D-glycero-beta-D-manno-heptose 7-phosphate from sedoheptulose 7-phosphate: step 1/1. Functionally, catalyzes the isomerization of sedoheptulose 7-phosphate in D-glycero-D-manno-heptose 7-phosphate. This Pseudoalteromonas atlantica (strain T6c / ATCC BAA-1087) protein is Phosphoheptose isomerase.